The chain runs to 207 residues: ATP synthase subunit 5, mitochondrial (207 aa).

Belongs to the ATPase delta chain family. In terms of assembly, F-type ATPases have 2 components, CF(1) - the catalytic core - and CF(0) - the membrane proton channel. CF(1) has five subunits: alpha(3), beta(3), gamma(1), delta(1), epsilon(1). CF(0) has three main subunits: a, b and c.

The protein resides in the mitochondrion. The protein localises to the mitochondrion inner membrane. Mitochondrial membrane ATP synthase (F(1)F(0) ATP synthase or Complex V) produces ATP from ADP in the presence of a proton gradient across the membrane which is generated by electron transport complexes of the respiratory chain. F-type ATPases consist of two structural domains, F(1) - containing the extramembraneous catalytic core and F(0) - containing the membrane proton channel, linked together by a central stalk and a peripheral stalk. During catalysis, ATP synthesis in the catalytic domain of F(1) is coupled via a rotary mechanism of the central stalk subunits to proton translocation. Part of the complex F(0) domain and the peripheric stalk, which acts as a stator to hold the catalytic alpha(3)beta(3) subcomplex and subunit a/ATP6 static relative to the rotary elements. This is ATP synthase subunit 5, mitochondrial (ATP5) from Candida glabrata (strain ATCC 2001 / BCRC 20586 / JCM 3761 / NBRC 0622 / NRRL Y-65 / CBS 138) (Yeast).